A 275-amino-acid chain; its full sequence is Elongation factor Ts (275 aa).

Positions 76–79 (TDFV) are involved in Mg(2+) ion dislocation from EF-Tu.

The protein belongs to the EF-Ts family.

The protein resides in the cytoplasm. In terms of biological role, associates with the EF-Tu.GDP complex and induces the exchange of GDP to GTP. It remains bound to the aminoacyl-tRNA.EF-Tu.GTP complex up to the GTP hydrolysis stage on the ribosome. The protein is Elongation factor Ts of Corynebacterium diphtheriae (strain ATCC 700971 / NCTC 13129 / Biotype gravis).